The following is a 449-amino-acid chain: Maltose-6'-phosphate glucosidase (449 aa).

F6–D72 contributes to the NAD(+) binding site. Substrate-binding residues include R95 and N149. Residue C171 coordinates Mn(2+). D172 acts as the Proton donor in catalysis. H202 is a Mn(2+) binding site. Y265 acts as the Proton acceptor in catalysis. R285 lines the substrate pocket.

It belongs to the glycosyl hydrolase 4 family. In terms of assembly, homotetramer. Requires Mn(2+) as cofactor. Fe(2+) is required as a cofactor. The cofactor is Co(2+). It depends on Ni(2+) as a cofactor. NAD(+) serves as cofactor.

The enzyme catalyses alpha-maltose 6'-phosphate + H2O = D-glucose 6-phosphate + D-glucose. Cellobiose-6'-phosphate and 6-phospho-beta-D-glucopyranoside are not substrates but competitive inhibitors of GlvA. In terms of biological role, hydrolyzes maltose-6'-phosphate and trehalose-6'-phosphate. Is involved in the catabolism of alpha-glycosides accumulated via a phosphoenolpyruvate-dependent maltose phosphotransferase system (PEP-PTS). Is also able to significantly catalyze the hydrolysis of both 6-phospho-alpha- and 6-phospho-beta-glucosides containing activated leaving groups such as p-nitrophenol and does so with retention and inversion, respectively, of the substrate anomeric configuration. The polypeptide is Maltose-6'-phosphate glucosidase (glvA) (Bacillus subtilis (strain 168)).